The chain runs to 531 residues: uncharacterized protein (531 aa).

The first 22 residues, 1-22 (MRLQFKLLGFLTLLGTSTILSA), serve as a signal peptide directing secretion. Cysteine 23 carries N-palmitoyl cysteine lipidation. The S-diacylglycerol cysteine moiety is linked to residue cysteine 23. A disordered region spans residues 31–51 (EPNNIEESGPITPTTPTTDVP). Residues 40–51 (PITPTTPTTDVP) show a composition bias toward low complexity.

This sequence belongs to the MG067/MG068/MG395 family.

The protein resides in the cell membrane. This is an uncharacterized protein from Mycoplasma pneumoniae (strain ATCC 29342 / M129 / Subtype 1) (Mycoplasmoides pneumoniae).